The chain runs to 380 residues: MRWANILLVAGLCRASLGQYNEEEDLAWLQYYMRQSRMSSYNYMPYYEDENSPYVYSYVPAPDTEAEPVPEAQQASSWQCPQECDCPPNFSSAMYCDTRNLRYLPFVPTRMKYVYFQNNQITAIQEGAFDNATELEWLALHNNQISSEKMGKRVFAKLKNLERLYMNNNNLTKMPSPLPRSLRELHLSYNQISKVPSNALEGLENLTALYLSHNYIFEMGASLKGLKSLILADLSYNHLRKVPDGLPMALEQLYLEYNYINAIPDDYFKVSPKLLYVRMSHNSLTNQGLSTNTFNSSSILELDLSYNRLQKIPRVSTNLENLYLQGNQINEFSISSFCTVVDVMNYSRLQVLRLDGNEIKRNAMPPDAPLCLRRATVIEI.

The N-terminal stretch at 1–18 (MRWANILLVAGLCRASLG) is a signal peptide. The LRRNT domain maps to 71-109 (EAQQASSWQCPQECDCPPNFSSAMYCDTRNLRYLPFVPT). Asn-89 carries N-linked (GlcNAc...) asparagine glycosylation. 8 LRR repeats span residues 110–131 (RMKYVYFQNNQITAIQEGAFDN), 134–147 (ELEWLALHNNQISS), 160–180 (NLERLYMNNNNLTKMPSPLPR), 181–202 (SLRELHLSYNQISKVPSNALEG), 205–227 (NLTALYLSHNYIFEMGASLKGLK), 228–248 (SLILADLSYNHLRKVPDGLPM), 249–270 (ALEQLYLEYNYINAIPDDYFKV), and 273–293 (KLLYVRMSHNSLTNQGLSTNT). N-linked (GlcNAc...) (keratan sulfate) asparagine glycosylation is present at Asn-131. Asn-170 is a glycosylation site (N-linked (GlcNAc...) (keratan sulfate) asparagine). A glycan (N-linked (GlcNAc...) (keratan sulfate) asparagine) is linked at Asn-205. N-linked (GlcNAc...) (keratan sulfate) asparagine glycosylation occurs at Asn-295. LRR repeat units lie at residues 298–317 (SILELDLSYNRLQKIPRVST) and 318–339 (NLENLYLQGNQINEFSISSFCT). Cys-338 and Cys-371 are disulfide-bonded. Residue Asn-345 is glycosylated (N-linked (GlcNAc...) asparagine). The LRR 11 repeat unit spans residues 348–371 (RLQVLRLDGNEIKRNAMPPDAPLC).

The protein belongs to the small leucine-rich proteoglycan (SLRP) family. SLRP class II subfamily. In terms of assembly, binds to type I and type II collagen. Post-translationally, binds keratan sulfate chains.

The protein resides in the secreted. Its subcellular location is the extracellular space. It localises to the extracellular matrix. In terms of biological role, affects the rate of fibrils formation. May have a primary role in collagen fibrillogenesis. This chain is Fibromodulin (FMOD), found in Gallus gallus (Chicken).